Here is a 204-residue protein sequence, read N- to C-terminus: Tetraspanin-13 (204 aa).

The Cytoplasmic segment spans residues 1–19; that stretch reads MVCGGFACSKNCLCALNLL. The helical transmembrane segment at 20–40 threads the bilayer; it reads YTLVSLLLIGIAAWGIGFGLI. Topologically, residues 41-44 are extracellular; the sequence is SSLR. The chain crosses the membrane as a helical span at residues 45 to 65; the sequence is VVGVVIAVGIFLFLIALVGLI. Residues 66-72 lie on the Cytoplasmic side of the membrane; it reads GAVKHHQ. The chain crosses the membrane as a helical span at residues 73–93; the sequence is VLLFFYMIILLLVFIVQFSVS. The Extracellular portion of the chain corresponds to 94–167; the sequence is CACLALNQEQ…IGRYAGEVLR (74 aa). Asn113 and Asn137 each carry an N-linked (GlcNAc...) asparagine glycan. Phosphoserine is present on Ser143. Residues 168 to 188 traverse the membrane as a helical segment; that stretch reads FVGGIGLFFSFTEILGVWLTY. Over 189–204 the chain is Cytoplasmic; that stretch reads RYRNQKDPRANPSAFL.

The protein belongs to the tetraspanin (TM4SF) family.

Its subcellular location is the membrane. The sequence is that of Tetraspanin-13 (TSPAN13) from Bos taurus (Bovine).